The chain runs to 231 residues: 2-C-methyl-D-erythritol 4-phosphate cytidylyltransferase (231 aa).

It belongs to the IspD/TarI cytidylyltransferase family. IspD subfamily.

It carries out the reaction 2-C-methyl-D-erythritol 4-phosphate + CTP + H(+) = 4-CDP-2-C-methyl-D-erythritol + diphosphate. Its pathway is isoprenoid biosynthesis; isopentenyl diphosphate biosynthesis via DXP pathway; isopentenyl diphosphate from 1-deoxy-D-xylulose 5-phosphate: step 2/6. Its function is as follows. Catalyzes the formation of 4-diphosphocytidyl-2-C-methyl-D-erythritol from CTP and 2-C-methyl-D-erythritol 4-phosphate (MEP). The protein is 2-C-methyl-D-erythritol 4-phosphate cytidylyltransferase of Rubrobacter xylanophilus (strain DSM 9941 / JCM 11954 / NBRC 16129 / PRD-1).